Here is an 87-residue protein sequence, read N- to C-terminus: uncharacterized protein (87 aa).

This is an uncharacterized protein from Bacillus subtilis (strain 168).